The primary structure comprises 541 residues: Chaperonin GroEL 2 (541 aa).

Residues 30–33 (TLGP), Lys-51, 87–91 (DGTTT), Gly-415, and Asp-496 contribute to the ATP site.

This sequence belongs to the chaperonin (HSP60) family. As to quaternary structure, forms a cylinder of 14 subunits composed of two heptameric rings stacked back-to-back. Interacts with the co-chaperonin GroES.

It is found in the cytoplasm. The enzyme catalyses ATP + H2O + a folded polypeptide = ADP + phosphate + an unfolded polypeptide.. Together with its co-chaperonin GroES, plays an essential role in assisting protein folding. The GroEL-GroES system forms a nano-cage that allows encapsulation of the non-native substrate proteins and provides a physical environment optimized to promote and accelerate protein folding. This chain is Chaperonin GroEL 2, found in Gluconacetobacter diazotrophicus (strain ATCC 49037 / DSM 5601 / CCUG 37298 / CIP 103539 / LMG 7603 / PAl5).